We begin with the raw amino-acid sequence, 415 residues long: Adenosylhomocysteinase (415 aa).

T53, D124, and E147 together coordinate substrate. 148–150 (TTT) contacts NAD(+). Positions 177 and 181 each coordinate substrate. Residues N182, 211-216 (GYGWVG), E234, N269, 290-292 (SGH), and N337 each bind NAD(+).

Belongs to the adenosylhomocysteinase family. NAD(+) is required as a cofactor.

The protein resides in the cytoplasm. It catalyses the reaction S-adenosyl-L-homocysteine + H2O = L-homocysteine + adenosine. It participates in amino-acid biosynthesis; L-homocysteine biosynthesis; L-homocysteine from S-adenosyl-L-homocysteine: step 1/1. May play a key role in the regulation of the intracellular concentration of adenosylhomocysteine. In Sulfurisphaera tokodaii (strain DSM 16993 / JCM 10545 / NBRC 100140 / 7) (Sulfolobus tokodaii), this protein is Adenosylhomocysteinase.